A 271-amino-acid chain; its full sequence is Formamidopyrimidine-DNA glycosylase (271 aa).

The active-site Schiff-base intermediate with DNA is the P2. Catalysis depends on E3, which acts as the Proton donor. K58 acts as the Proton donor; for beta-elimination activity in catalysis. Residues H92, R111, and R152 each contribute to the DNA site. The segment at 237 to 271 adopts an FPG-type zinc-finger fold; that stretch reads FVYGRQQQPCKQCGSLLRQTTIRQRTTVWCGHCQG. R261 functions as the Proton donor; for delta-elimination activity in the catalytic mechanism.

The protein belongs to the FPG family. Monomer. It depends on Zn(2+) as a cofactor.

It catalyses the reaction Hydrolysis of DNA containing ring-opened 7-methylguanine residues, releasing 2,6-diamino-4-hydroxy-5-(N-methyl)formamidopyrimidine.. It carries out the reaction 2'-deoxyribonucleotide-(2'-deoxyribose 5'-phosphate)-2'-deoxyribonucleotide-DNA = a 3'-end 2'-deoxyribonucleotide-(2,3-dehydro-2,3-deoxyribose 5'-phosphate)-DNA + a 5'-end 5'-phospho-2'-deoxyribonucleoside-DNA + H(+). In terms of biological role, involved in base excision repair of DNA damaged by oxidation or by mutagenic agents. Acts as a DNA glycosylase that recognizes and removes damaged bases. Has a preference for oxidized purines, such as 7,8-dihydro-8-oxoguanine (8-oxoG). Has AP (apurinic/apyrimidinic) lyase activity and introduces nicks in the DNA strand. Cleaves the DNA backbone by beta-delta elimination to generate a single-strand break at the site of the removed base with both 3'- and 5'-phosphates. The protein is Formamidopyrimidine-DNA glycosylase (mutM1) of Xylella fastidiosa (strain 9a5c).